Consider the following 380-residue polypeptide: Cytochrome b (380 aa).

4 consecutive transmembrane segments (helical) span residues 34-54 (FGSL…LLAM), 78-99 (WLIR…YLHI), 114-134 (WNIG…GYVL), and 179-199 (FFAL…VHLT). Heme b contacts are provided by His84 and His98. Heme b-binding residues include His183 and His197. His202 lines the a ubiquinone pocket. The next 4 helical transmembrane spans lie at 227-247 (IKDM…ALFS), 289-309 (LGGV…PLLH), 321-341 (LLPF…WVGS), and 348-368 (FIII…VLFP).

It belongs to the cytochrome b family. As to quaternary structure, the cytochrome bc1 complex contains 11 subunits: 3 respiratory subunits (MT-CYB, CYC1 and UQCRFS1), 2 core proteins (UQCRC1 and UQCRC2) and 6 low-molecular weight proteins (UQCRH/QCR6, UQCRB/QCR7, UQCRQ/QCR8, UQCR10/QCR9, UQCR11/QCR10 and a cleavage product of UQCRFS1). This cytochrome bc1 complex then forms a dimer. The cofactor is heme b.

It localises to the mitochondrion inner membrane. Its function is as follows. Component of the ubiquinol-cytochrome c reductase complex (complex III or cytochrome b-c1 complex) that is part of the mitochondrial respiratory chain. The b-c1 complex mediates electron transfer from ubiquinol to cytochrome c. Contributes to the generation of a proton gradient across the mitochondrial membrane that is then used for ATP synthesis. The protein is Cytochrome b (MT-CYB) of Gymnorhina tibicen (Australian magpie).